We begin with the raw amino-acid sequence, 156 residues long: Keratin-associated protein 13-4 (156 aa).

Tandem repeats lie at residues 37 to 46, 47 to 56, 57 to 66, and 73 to 82. The tract at residues 37 to 82 is 4 X 10 AA approximate repeats; the sequence is CQLGSSLYRNCQKTCWEPTSCRKSCYRRRTSMLCSPCQTTCSRSLG.

It belongs to the PMG family. Interacts with hair keratins.

In the hair cortex, hair keratin intermediate filaments are embedded in an interfilamentous matrix, consisting of hair keratin-associated proteins (KRTAP), which are essential for the formation of a rigid and resistant hair shaft through their extensive disulfide bond cross-linking with abundant cysteine residues of hair keratins. The matrix proteins include the high-sulfur and high-glycine-tyrosine keratins. The protein is Keratin-associated protein 13-4 (KRTAP13-4) of Macaca fascicularis (Crab-eating macaque).